A 395-amino-acid chain; its full sequence is MAAASGYTDLREKLKSMTSRDNYKAGSREAAAAAAAAVAAAAAAAAAAEPYPASGTTKRKYQEDSDPERSDYEEHQLQKEEEARKVKSGIRQIRLFSQDECSKIEARIDEVVSRAEKGLYNEHTVDRAPLRNKYFFGEGYTYGAQLQKRGPGQERLYPPGDVDEIPDWVHQLVIQKLVEHRVIPEGFVNSAVINDYQPGGCIVSHVDPIHIFERPIVSVSFFSDSALCFGCKFQFKPIRVSEPVLSLPVRRGSVTVLSGYAADEITHCIRPQDIKERRAVIILRKTRLDAPRLETKSLSSSTLPPSYASDRLSGNTRDPALKPKRSHRKADPDAAHRPRILEMDKEENRRSVLLPTHRRRGSFSSENYWRKSYESSEDCPEAASSPTRKVKMRRH.

Disordered stretches follow at residues M1–R28 and A47–A83. An N-acetylalanine modification is found at A2. K58 is covalently cross-linked (Glycyl lysine isopeptide (Lys-Gly) (interchain with G-Cter in ubiquitin)). Positions K60–A83 are enriched in basic and acidic residues. Phosphoserine occurs at positions 65 and 70. Positions E68 to K117 form a coiled coil. Phosphotyrosine is present on Y72. K87 is covalently cross-linked (Glycyl lysine isopeptide (Lys-Gly) (interchain with G-Cter in SUMO1)). S88 bears the Phosphoserine mark. K133 is subject to N6-acetyllysine. Y140 is an active-site residue. 2-oxoglutarate is bound by residues N194, Y196, and H205. C231 and C268 are joined by a disulfide. N6-acetyllysine is present on K236. H267 and R278 together coordinate 2-oxoglutarate. The segment at E294–H395 is disordered. Low complexity predominate over residues K296–S306. K322 participates in a covalent cross-link: Glycyl lysine isopeptide (Lys-Gly) (interchain with G-Cter in SUMO1). Position 326 is a phosphoserine (S326). A Glycyl lysine isopeptide (Lys-Gly) (interchain with G-Cter in SUMO2) cross-link involves residue K329. Over residues K329–R350 the composition is skewed to basic and acidic residues. Residue R360 is modified to Omega-N-methylarginine. S362, S372, S375, and S385 each carry phosphoserine.

It belongs to the alkB family. As to quaternary structure, monomer. Interacts with RBM33; promoting desumoylation by SENP1 and recruitment to N(6)-methyladenosine-containing mRNAs. Interacts (when acetylated by KAT8) with PSPC1; interaction facilitates recognition of N(6)-methyladenosine (m6A) mRNA. Fe(2+) is required as a cofactor. Phosphorylated at Ser-88 and Ser-326 in response to reactive oxygen species (ROS), promoting sumoylation and inactivation. In terms of processing, acetylated by KAT8 at Lys-236, promoting interaction with PSPC1, thereby facilitating recognition of N(6)-methyladenosine (m6A) mRNA by ALKBH5. Deacetylated at Lys-236 by HDAC7. Post-translationally, sumoylated at Lys-87 and Lys-322 by PIAS4 following phosphorylation at Ser-88 and Ser-326 in response to reactive oxygen species (ROS), inhibiting the RNA demethylase activity. Desumoylated by SENP1; relieving RNA demethylase inhibition, leading to N(6)-methyladenosine-containing mRNAs demethylation. Ubiquitinated at Lys-58 via 'Lys-48'-linked polyubiquitin chain, leading to its degradation by the proteasome. Deubiquitinated at Lys-58 by USP9X, promoting its stabilizazion. Widely expressed, with highest expression in testis. In testis, present in almost all testicular cell types except elongating and elongated spermatids (at protein level). Among spermatogenic cells, present at high level in spermatocytes; medium levels in spermatogonia and lower levels in round spermatids (at protein level).

The protein localises to the nucleus speckle. It catalyses the reaction an N(6)-methyladenosine in mRNA + 2-oxoglutarate + O2 = an adenosine in mRNA + formaldehyde + succinate + CO2. With respect to regulation, RNA demethylase activity is inhibited following sumoylation. Inhibition is relieved following desumoylation. Inhibited by histone demethylase inhibitor IOX1. Dioxygenase that specifically demethylates N(6)-methyladenosine (m6A) RNA, the most prevalent internal modification of messenger RNA (mRNA) in higher eukaryotes. Demethylates RNA by oxidative demethylation, which requires molecular oxygen, alpha-ketoglutarate and iron. Demethylation of m6A mRNA affects mRNA processing, translation and export. Can also demethylate N(6)-methyladenosine in single-stranded DNA (in vitro). Required for the late meiotic and haploid phases of spermatogenesis by mediating m6A demethylation in spermatocytes and round spermatids: m6A demethylation of target transcripts is required for correct splicing and the production of longer 3'-UTR mRNAs in male germ cells. Involved in paraspeckle assembly, a nuclear membraneless organelle, by undergoing liquid-liquid phase separation. Paraspeckle assembly is coupled with m6A demethylation of RNAs, such as NEAT1 non-coding RNA. Also acts as a negative regulator of T-cell development: inhibits gamma-delta T-cell proliferation via demethylation of JAG1 and NOTCH2 transcripts. Inhibits regulatory T-cell (Treg) recruitment by mediating demethylation and destabilization of CCL28 mRNAs. The sequence is that of RNA demethylase ALKBH5 from Mus musculus (Mouse).